A 48-amino-acid polypeptide reads, in one-letter code: uncharacterized protein (48 aa).

The protein belongs to the ELIP/psbS family.

The protein localises to the plastid. It is found in the chloroplast. Its function is as follows. Possible role in chlorophyll and/or carotenoid binding. This is an uncharacterized protein from Porphyra purpurea (Red seaweed).